The chain runs to 2153 residues: Genome polyprotein (2153 aa).

Gly2 carries the N-myristoyl glycine; by host lipid modification. Positions 213 to 240 (HTHPGQSGHQIRGPSQSNDRSGGKPDED) are disordered. Over residues 216–232 (PGQSGHQIRGPSQSNDR) the composition is skewed to polar residues. An amphipathic alpha-helix region spans residues 565–584 (ELQNNDDPVENFVESTLKEV). Active-site for protease 2A activity residues include His864 and Asp880. Residues Cys897 and Cys899 each coordinate Zn(2+). Cys951 acts as the For protease 2A activity in catalysis. Zn(2+)-binding residues include Cys957 and His959. The tract at residues 1088 to 1158 (SDSWLRKFTE…GFSSASSEAQ (71 aa)) is membrane-binding. The interval 1088–1224 (SDSWLRKFTE…NPGCGKSLVT (137 aa)) is oligomerization. The tract at residues 1109 to 1113 (SIKIG) is RNA-binding. The 160-residue stretch at 1187-1346 (TKIQKDLKQL…FRNTTGLLDV (160 aa)) folds into the SF3 helicase domain. 1214-1221 (GNPGCGKS) provides a ligand contact to ATP. Residues Cys1353, Cys1365, and Cys1370 each contribute to the Zn(2+) site. The C4-type; degenerate zinc finger occupies 1353-1370 (CTGCPKPAHYKTCCPLLC). Positions 1397-1404 (ENATRKKV) are RNA-binding. Residues 1408-1413 (LDAIFQ) form an oligomerization region. The stretch at 1460–1480 (VHYMLNCLGSLIIILGTVYAL) is an intramembrane region. An O-(5'-phospho-RNA)-tyrosine modification is found at Tyr1491. In terms of domain architecture, Peptidase C3 spans 1511-1689 (GPEHEFVRAL…YGAALLRKYF (179 aa)). Catalysis depends on for protease 3C activity residues His1550, Glu1581, and Cys1657. The region spanning 1920 to 2033 (GELLAFDYTN…SYPFELDPME (114 aa)) is the RdRp catalytic domain. 2 residues coordinate Mg(2+): Asp1926 and Asp2019.

This sequence belongs to the picornaviruses polyprotein family. Interacts with capsid protein VP1 and capsid protein VP3 to form heterotrimeric protomers. In terms of assembly, interacts with capsid protein VP0, and capsid protein VP3 to form heterotrimeric protomers. Five protomers subsequently associate to form pentamers which serve as building blocks for the capsid. Interacts with capsid protein VP2, capsid protein VP3 and capsid protein VP4 following cleavage of capsid protein VP0. Interacts (via C-terminus) with capsid protein VP4 (via C-terminus). Interacts with host CDHR3 (via N-terminus); this interaction occurs near each threefold vertex of the capsid and allows the virus attachment and entry into the host cell. As to quaternary structure, interacts with capsid protein VP1 and capsid protein VP3 in the mature capsid. Interacts with host CDHR3 (via N-terminus); this interaction occurs near each threefold vertex of the capsid and allows the virus attachment and entry into the host cell. Interacts with capsid protein VP0 and capsid protein VP1 to form heterotrimeric protomers. Five protomers subsequently associate to form pentamers which serve as building blocks for the capsid. Interacts with capsid protein VP4 in the mature capsid. Interacts with protein 2C; this interaction may be important for virion morphogenesis. Interacts with host CDHR3 (via N-terminus); this interaction occurs near each threefold vertex of the capsid and allows the virus attachment and entry into the host cell. In terms of assembly, interacts (via C-terminus) with capsid protein VP1 (via C-terminus). Interacts with capsid protein VP3. As to quaternary structure, homodimer. Homohexamer; forms a hexameric ring structure with 6-fold symmetry characteristic of AAA+ ATPases. Interacts (via N-terminus) with host RTN3 (via reticulon domain); this interaction is important for viral replication. Interacts with capsid protein VP3; this interaction may be important for virion morphogenesis. In terms of assembly, interacts with protein 3CD. As to quaternary structure, homodimer. Interacts with host GBF1. Interacts (via GOLD domain) with host ACBD3 (via GOLD domain); this interaction allows the formation of a viral protein 3A/ACBD3 heterotetramer with a 2:2 stoichiometry, which will stimulate the recruitment of host PI4KB in order to synthesize PI4P at the viral RNA replication sites. Interacts with RNA-directed RNA polymerase. In terms of assembly, interacts with protein 3AB and with RNA-directed RNA polymerase. As to quaternary structure, interacts with Viral protein genome-linked and with protein 3CD. The cofactor is Mg(2+). Specific enzymatic cleavages in vivo by the viral proteases yield processing intermediates and the mature proteins. In terms of processing, myristoylation is required for the formation of pentamers during virus assembly. Further assembly of 12 pentamers and a molecule of genomic RNA generates the provirion. Post-translationally, during virion maturation, immature virions are rendered infectious following cleavage of VP0 into VP4 and VP2. This maturation seems to be an autocatalytic event triggered by the presence of RNA in the capsid and it is followed by a conformational change infectious virion. Myristoylation is required during RNA encapsidation and formation of the mature virus particle. In terms of processing, VPg is uridylylated by the polymerase into VPg-pUpU. This acts as a nucleotide-peptide primer for the genomic RNA replication.

The protein resides in the virion. It is found in the host cytoplasm. Its subcellular location is the host cytoplasmic vesicle membrane. The protein localises to the host nucleus. The catalysed reaction is a ribonucleoside 5'-triphosphate + H2O = a ribonucleoside 5'-diphosphate + phosphate + H(+). It carries out the reaction Selective cleavage of Gln-|-Gly bond in the poliovirus polyprotein. In other picornavirus reactions Glu may be substituted for Gln, and Ser or Thr for Gly.. The enzyme catalyses Selective cleavage of Tyr-|-Gly bond in the picornavirus polyprotein.. It catalyses the reaction RNA(n) + a ribonucleoside 5'-triphosphate = RNA(n+1) + diphosphate. Replication or transcription is subject to high level of random mutations by the nucleotide analog ribavirin. Forms an icosahedral capsid of pseudo T=3 symmetry with capsid proteins VP2 and VP3. The capsid is 300 Angstroms in diameter, composed of 60 copies of each capsid protein and enclosing the viral positive strand RNA genome. Capsid protein VP1 mainly forms the vertices of the capsid. The VP1 C-termini form 60 dominant spike-like protrusions on the surface of the virion. Capsid protein VP1 interacts with host cell receptor CDHR3 to provide virion attachment to target host cells. This attachment induces virion internalization. Tyrosine kinases are probably involved in the entry process. After binding to its receptor, the capsid undergoes conformational changes. Capsid protein VP1 N-terminus (that contains an amphipathic alpha-helix) and capsid protein VP4 are externalized. Together, they shape a pore in the host membrane through which viral genome is translocated to host cell cytoplasm. Its function is as follows. Forms an icosahedral capsid of pseudo T=3 symmetry with capsid proteins VP2 and VP3. The capsid is 300 Angstroms in diameter, composed of 60 copies of each capsid protein and enclosing the viral positive strand RNA genome. Functionally, lies on the inner surface of the capsid shell. After binding to the host receptor, the capsid undergoes conformational changes. Capsid protein VP4 is released, Capsid protein VP1 N-terminus is externalized, and together, they shape a pore in the host membrane through which the viral genome is translocated into the host cell cytoplasm. In terms of biological role, component of immature procapsids, which is cleaved into capsid proteins VP4 and VP2 after maturation. Allows the capsid to remain inactive before the maturation step. Cysteine protease that cleaves viral polyprotein and specific host proteins. It is responsible for the autocatalytic cleavage between the P1 and P2 regions, which is the first cleavage occurring in the polyprotein. Also cleaves the host translation initiation factor EIF4G1, in order to shut down the capped cellular mRNA translation. Inhibits the host nucleus-cytoplasm protein and RNA trafficking by cleaving host members of the nuclear pores. Counteracts stress granule formation probably by antagonizing its assembly or promoting its dissassembly. Its function is as follows. Plays an essential role in the virus replication cycle by acting as a viroporin. Creates a pore in the host endoplasmic reticulum and as a consequence releases Ca2+ in the cytoplasm of infected cell. In turn, high levels of cytoplasmic calcium may trigger membrane trafficking and transport of viral ER-associated proteins to viroplasms, sites of viral genome replication. Functionally, induces and associates with structural rearrangements of intracellular membranes. Displays RNA-binding, nucleotide binding and NTPase activities. May play a role in virion morphogenesis and viral RNA encapsidation by interacting with the capsid protein VP3. In terms of biological role, localizes the viral replication complex to the surface of membranous vesicles. Together with protein 3CD binds the Cis-Active RNA Element (CRE) which is involved in RNA synthesis initiation. Acts as a cofactor to stimulate the activity of 3D polymerase, maybe through a nucleid acid chaperone activity. Localizes the viral replication complex to the surface of membranous vesicles. It inhibits host cell endoplasmic reticulum-to-Golgi apparatus transport and causes the disassembly of the Golgi complex, possibly through GBF1 interaction. This would result in depletion of MHC, trail receptors and IFN receptors at the host cell surface. Plays an essential role in viral RNA replication by recruiting ACBD3 and PI4KB at the viral replication sites, thereby allowing the formation of the rearranged membranous structures where viral replication takes place. Its function is as follows. Acts as a primer for viral RNA replication and remains covalently bound to viral genomic RNA. VPg is uridylylated prior to priming replication into VPg-pUpU. The oriI viral genomic sequence may act as a template for this. The VPg-pUpU is then used as primer on the genomic RNA poly(A) by the RNA-dependent RNA polymerase to replicate the viral genome. During genome replication, the VPg-RNA linkage is removed by the host TDP2, thereby accelerating replication. During the late stage of the replication cycle, host TDP2 is excluded from sites of viral RNA synthesis and encapsidation, allowing for the generation of progeny virions. Functionally, involved in the viral replication complex and viral polypeptide maturation. It exhibits protease activity with a specificity and catalytic efficiency that is different from protease 3C. Protein 3CD lacks polymerase activity. Protein 3CD binds to the 5'UTR of the viral genome. In terms of biological role, major viral protease that mediates proteolytic processing of the polyprotein. Cleaves host EIF5B, contributing to host translation shutoff. Also cleaves host PABPC1, contributing to host translation shutoff. Replicates the viral genomic RNA on the surface of intracellular membranes. May form linear arrays of subunits that propagate along a strong head-to-tail interaction called interface-I. Covalently attaches UMP to a tyrosine of VPg, which is used to prime RNA synthesis. The positive stranded RNA genome is first replicated at virus induced membranous vesicles, creating a dsRNA genomic replication form. This dsRNA is then used as template to synthesize positive stranded RNA genomes. ss(+)RNA genomes are either translated, replicated or encapsidated. The polypeptide is Genome polyprotein (Homo sapiens (Human)).